The sequence spans 255 residues: 5'-nucleotidase SurE (255 aa).

Residues aspartate 8, aspartate 9, serine 39, and asparagine 95 each contribute to the a divalent metal cation site.

It belongs to the SurE nucleotidase family. Requires a divalent metal cation as cofactor.

The protein resides in the cytoplasm. It carries out the reaction a ribonucleoside 5'-phosphate + H2O = a ribonucleoside + phosphate. Functionally, nucleotidase that shows phosphatase activity on nucleoside 5'-monophosphates. This is 5'-nucleotidase SurE from Thermosipho melanesiensis (strain DSM 12029 / CIP 104789 / BI429).